Here is a 182-residue protein sequence, read N- to C-terminus: MIRATIILAAVAALAFSAPVPEVPENYDDIPAEYKSLIPAEVSEHLKSITPEEKAILKEVAKGYKDFKSEDDFLNALKEKSPTLHEKASKLHQIVKDKVNALNDEAKAFVKKAIAEGRKIHAQYLAGEKPSLDTLKTTAKTHIEAYKGLSQDAKDSIAKEFPILTGFFKNEKVQAMVGQYLN.

A signal peptide spans 1–17 (MIRATIILAAVAALAFS). A coiled-coil region spans residues 86-106 (EKASKLHQIVKDKVNALNDEA).

It belongs to the fatty-acid and retinol-binding protein (FARBP) family.

It is found in the secreted. Its function is as follows. Probably binds lipids. This chain is Fatty-acid and retinol-binding protein 1 (far-1), found in Caenorhabditis elegans.